The sequence spans 321 residues: Probable membrane-associated kinase regulator 3 (321 aa).

Polar residues predominate over residues 297-314; that stretch reads KSNVTESELCSSRTSVST. The interval 297–321 is disordered; the sequence is KSNVTESELCSSRTSVSTCGDLDKD.

The protein localises to the cell membrane. The polypeptide is Probable membrane-associated kinase regulator 3 (MAKR3) (Arabidopsis thaliana (Mouse-ear cress)).